A 75-amino-acid polypeptide reads, in one-letter code: MASSALAKPQMRGLLARRLRIHIVGAFVVSLGVAAFYKYAVAEPRKKAYADFYRNYDSVKYFEEMRKAGVFQSVK.

The Mitochondrial matrix segment spans residues 1–13; it reads MASSALAKPQMRG. Residues 14-54 form a helical membrane-spanning segment; that stretch reads LLARRLRIHIVGAFVVSLGVAAFYKYAVAEPRKKAYADFYR. Topologically, residues 55-75 are mitochondrial intermembrane; the sequence is NYDSVKYFEEMRKAGVFQSVK.

Belongs to the cytochrome c oxidase subunit 6c family. In terms of assembly, component of the cytochrome c oxidase (complex IV, CIV), a multisubunit enzyme composed of 14 subunits. The complex is composed of a catalytic core of 3 subunits MT-CO1, MT-CO2 and MT-CO3, encoded in the mitochondrial DNA, and 11 supernumerary subunits COX4I, COX5A, COX5B, COX6A, COX6B, COX6C, COX7A, COX7B, COX7C, COX8 and NDUFA4, which are encoded in the nuclear genome. The complex exists as a monomer or a dimer and forms supercomplexes (SCs) in the inner mitochondrial membrane with NADH-ubiquinone oxidoreductase (complex I, CI) and ubiquinol-cytochrome c oxidoreductase (cytochrome b-c1 complex, complex III, CIII), resulting in different assemblies (supercomplex SCI(1)III(2)IV(1) and megacomplex MCI(2)III(2)IV(2)).

Its subcellular location is the mitochondrion inner membrane. Its pathway is energy metabolism; oxidative phosphorylation. Component of the cytochrome c oxidase, the last enzyme in the mitochondrial electron transport chain which drives oxidative phosphorylation. The respiratory chain contains 3 multisubunit complexes succinate dehydrogenase (complex II, CII), ubiquinol-cytochrome c oxidoreductase (cytochrome b-c1 complex, complex III, CIII) and cytochrome c oxidase (complex IV, CIV), that cooperate to transfer electrons derived from NADH and succinate to molecular oxygen, creating an electrochemical gradient over the inner membrane that drives transmembrane transport and the ATP synthase. Cytochrome c oxidase is the component of the respiratory chain that catalyzes the reduction of oxygen to water. Electrons originating from reduced cytochrome c in the intermembrane space (IMS) are transferred via the dinuclear copper A center (CU(A)) of subunit 2 and heme A of subunit 1 to the active site in subunit 1, a binuclear center (BNC) formed by heme A3 and copper B (CU(B)). The BNC reduces molecular oxygen to 2 water molecules using 4 electrons from cytochrome c in the IMS and 4 protons from the mitochondrial matrix. The chain is Cytochrome c oxidase subunit 6C (COX6C) from Nycticebus coucang (Slow loris).